The following is a 144-amino-acid chain: Ribonuclease VapC1 (144 aa).

The PINc domain maps to 6-132 (VFVDGNVIVD…SFYSPDIEVL (127 aa)). Mg(2+) contacts are provided by D9 and D102.

Belongs to the PINc/VapC protein family. Mg(2+) is required as a cofactor.

Functionally, toxic component of a type II toxin-antitoxin (TA) system. An RNase. The sequence is that of Ribonuclease VapC1 from Aquifex aeolicus (strain VF5).